Consider the following 65-residue polypeptide: Large ribosomal subunit protein bL35 (65 aa).

The tract at residues 1–26 (MPKMKTHRGAAKRFRKTGTGKLKRGK) is disordered.

It belongs to the bacterial ribosomal protein bL35 family.

In Clostridium beijerinckii (strain ATCC 51743 / NCIMB 8052) (Clostridium acetobutylicum), this protein is Large ribosomal subunit protein bL35.